The following is a 248-amino-acid chain: Probable transcriptional regulatory protein PFL_4766 (248 aa).

It belongs to the TACO1 family.

It localises to the cytoplasm. The sequence is that of Probable transcriptional regulatory protein PFL_4766 from Pseudomonas fluorescens (strain ATCC BAA-477 / NRRL B-23932 / Pf-5).